Here is a 157-residue protein sequence, read N- to C-terminus: 2-C-methyl-D-erythritol 2,4-cyclodiphosphate synthase (157 aa).

A divalent metal cation-binding residues include aspartate 9 and histidine 11. Residues 9-11 (DVH) and 35-36 (HS) each bind 4-CDP-2-C-methyl-D-erythritol 2-phosphate. Residue histidine 43 coordinates a divalent metal cation. Residues 57–59 (DIG), 62–66 (FPDTD), 101–107 (AEKPKMA), 133–136 (TTTE), phenylalanine 140, and arginine 143 contribute to the 4-CDP-2-C-methyl-D-erythritol 2-phosphate site.

This sequence belongs to the IspF family. Homotrimer. The cofactor is a divalent metal cation.

The catalysed reaction is 4-CDP-2-C-methyl-D-erythritol 2-phosphate = 2-C-methyl-D-erythritol 2,4-cyclic diphosphate + CMP. It participates in isoprenoid biosynthesis; isopentenyl diphosphate biosynthesis via DXP pathway; isopentenyl diphosphate from 1-deoxy-D-xylulose 5-phosphate: step 4/6. Functionally, involved in the biosynthesis of isopentenyl diphosphate (IPP) and dimethylallyl diphosphate (DMAPP), two major building blocks of isoprenoid compounds. Catalyzes the conversion of 4-diphosphocytidyl-2-C-methyl-D-erythritol 2-phosphate (CDP-ME2P) to 2-C-methyl-D-erythritol 2,4-cyclodiphosphate (ME-CPP) with a corresponding release of cytidine 5-monophosphate (CMP). The polypeptide is 2-C-methyl-D-erythritol 2,4-cyclodiphosphate synthase (Listeria monocytogenes serotype 4b (strain F2365)).